Reading from the N-terminus, the 171-residue chain is NADH-ubiquinone oxidoreductase chain 6 (171 aa).

Transmembrane regions (helical) follow at residues 1–21 (MYVM…ISSK), 25–44 (IYGG…IIMG), 49–71 (FMGL…YTTA), 85–105 (VVIW…VAWM), and 150–170 (WFAA…IEII).

It belongs to the complex I subunit 6 family. Core subunit of respiratory chain NADH dehydrogenase (Complex I) which is composed of 45 different subunits.

The protein resides in the mitochondrion inner membrane. The enzyme catalyses a ubiquinone + NADH + 5 H(+)(in) = a ubiquinol + NAD(+) + 4 H(+)(out). In terms of biological role, core subunit of the mitochondrial membrane respiratory chain NADH dehydrogenase (Complex I) which catalyzes electron transfer from NADH through the respiratory chain, using ubiquinone as an electron acceptor. Essential for the catalytic activity and assembly of complex I. The sequence is that of NADH-ubiquinone oxidoreductase chain 6 (MT-ND6) from Lemur catta (Ring-tailed lemur).